The following is a 412-amino-acid chain: Sulfhydrogenase 2 subunit alpha (412 aa).

4 residues coordinate Ni(2+): Cys60, Cys63, Cys402, and Cys405. Residue Cys63 participates in Fe cation binding. Cys405 lines the Fe cation pocket.

The protein belongs to the [NiFe]/[NiFeSe] hydrogenase large subunit family. In terms of assembly, dimer of heterotetramer of alpha, beta, gamma and delta subunits. The nickel-containing alpha and delta subunits constitute the hydrogenase activity. The beta and gamma subunits (flavin-containing dimer) constitute the sulfur reductase activity. Ni(2+) serves as cofactor. The cofactor is Fe cation.

The protein localises to the cytoplasm. It carries out the reaction H2 + NADP(+) = NADPH + H(+). The enzyme catalyses H2 + NAD(+) = NADH + H(+). Functionally, part of a bifunctional enzyme complex that functions as a hydrogen-evolving hydrogenase with sulfur-reducing activity. May play a role in hydrogen cycling during fermentative growth. Activity exhibited with NAD in addition to NADPH. The alpha and delta subunits form the hydrogenase component that catalyzes the reduction of protons to evolve hydrogen. The sequence is that of Sulfhydrogenase 2 subunit alpha from Pyrococcus furiosus (strain ATCC 43587 / DSM 3638 / JCM 8422 / Vc1).